The chain runs to 465 residues: MKLSLAAALLGALAVSAQTSTECNPLKQKCPADPALAGSADFGLTSESPRFHATGGTPTYGNDGASLTIGKRFDAPKLTSDFYIMFGYVEWEIKAAPGKGIVSSAVLLSDCLDEIDWEFLGGDPNQVQSNFFGKGDTTTYDRVKFHPAPNNNQEFHKYAVDWTADKTTFYIDGQNVRELTPDAAKGQYPQTPMRVLAGSWAGGDPSNNQGTIEWAGGETDFSKVPFTMFVKSIKVTDYSTGKEYVYKDMTGKWESIQAVDGQVNKSGKPGSGPKVESSTLPSSPSTSAHVPVHTVPGGGIGNPQAPNTGSSPSNTLTNGPSSTMTSLVGLPSSWIVTETGTGGVVTPTSAAESTSHHSDYTSRSSRSVSSSVSASSGNGGHGMTTSTGSGSAPTGTGSLPGSGSGSAPGYPVPTGTNGGGSNNPTDGGASPTSPAMQAPGSTGAIHSVSNALLLSFCAIAAWALV.

An N-terminal signal peptide occupies residues 1-21; sequence MKLSLAAALLGALAVSAQTST. One can recognise a GH16 domain in the interval 22 to 223; that stretch reads ECNPLKQKCP…WAGGETDFSK (202 aa). A disulfide bond links C23 and C30. Residue E114 is the Nucleophile of the active site. The active-site Proton donor is E118. Chitin is bound by residues E118, W200, and T211. Disordered regions lie at residues 261 to 325 and 339 to 442; these read GQVN…STMT and TGTG…PGST. A glycan (N-linked (GlcNAc...) asparagine) is linked at N264. Over residues 277-287 the composition is skewed to low complexity; the sequence is SSTLPSSPSTS. Over residues 304 to 325 the composition is skewed to polar residues; sequence QAPNTGSSPSNTLTNGPSSTMT. Low complexity-rich tracts occupy residues 339–348, 361–376, and 383–397; these read TGTGGVVTPT, TSRSSRSVSSSVSASS, and MTTSTGSGSAPTGTG. S441 carries GPI-anchor amidated serine lipidation. A propeptide spans 442-465 (removed in mature form); it reads TGAIHSVSNALLLSFCAIAAWALV.

This sequence belongs to the glycosyl hydrolase 16 family. CRH1 subfamily. In terms of processing, the GPI-anchor is attached to the protein in the endoplasmic reticulum and serves to target the protein to the cell surface. There, the glucosamine-inositol phospholipid moiety is cleaved off and the GPI-modified mannoprotein is covalently attached via its lipidless GPI glycan remnant to the 1,6-beta-glucan of the outer cell wall layer.

It is found in the secreted. The protein localises to the cell wall. The protein resides in the membrane. The catalysed reaction is Random endo-hydrolysis of N-acetyl-beta-D-glucosaminide (1-&gt;4)-beta-linkages in chitin and chitodextrins.. Its function is as follows. Dual chitinase/transglycosylase that plays a role in cell wall architecture. Chitinase and transglycosylase activities are coupled. Required for the polysaccharide cross-linking at the septa and the cell wall. More specifically, transfers chitin to 1,6-beta-glucan in the cell wall. The chain is Crh-like protein ARB_05253 from Arthroderma benhamiae (strain ATCC MYA-4681 / CBS 112371) (Trichophyton mentagrophytes).